The chain runs to 440 residues: Mitochondrial translation factor 2 (440 aa).

The transit peptide at 1-15 (MIRTSSILKNCNYRY) directs the protein to the mitochondrion.

The protein localises to the mitochondrion matrix. Its function is as follows. Required for the processing and/or for the stability of the CYTB and COX1 intron-containing pre-mRNAs and of the ATP6 transcript. Could be a stem-loop RNA-binding protein that plays a role in determining RNA stability. This is Mitochondrial translation factor 2 (MTF2) from Saccharomyces cerevisiae (strain ATCC 204508 / S288c) (Baker's yeast).